Reading from the N-terminus, the 547-residue chain is Sodium/hydrogen exchanger 9B2 (547 aa).

The disordered stretch occupies residues 1 to 68; it reads MEDEDKTAEC…PQDSPTEPNG (68 aa). The Cytoplasmic segment spans residues 1–86; the sequence is MEDEDKTAEC…ACPPRGCLAR (86 aa). Residues 23 to 45 are compositionally biased toward basic and acidic residues; sequence APPHHELQEERVMSLRGTDRSEP. Residue S49 is modified to Phosphoserine. A helical transmembrane segment spans residues 87 to 104; that stretch reads VITNGTMVVLLWAMVWSV. Residues 105–113 are Extracellular-facing; that stretch reads TGPECLPGG. A helical membrane pass occupies residues 114–133; it reads NLFGIIILFYCSITGGKLFG. Over 134–144 the chain is Cytoplasmic; sequence LIKFPTLPPLP. A helical membrane pass occupies residues 145–161; that stretch reads PLLGMLLAGFLLRNIPV. Residues 162–171 lie on the Extracellular side of the membrane; that stretch reads INDSVRIQHK. Residues 172–189 form a helical membrane-spanning segment; that stretch reads WSSSLRSIALSVILVRAG. The Cytoplasmic segment spans residues 190–200; that stretch reads LGLDSKALRKL. The helical transmembrane segment at 201–227 threads the bilayer; sequence KGVCVRLAMGPCIVEACASAILSHFLM. Over 228 to 233 the chain is Extracellular; that stretch reads GLPWQW. A helical transmembrane segment spans residues 234 to 242; sequence GFILGFVVG. Residues 243–270 lie on the Cytoplasmic side of the membrane; that stretch reads AVSPAVVVPSMLLLQEGGYGVGKGIPTL. Residues V244, G275, D278, and D279 each coordinate Na(+). A helical membrane pass occupies residues 271–290; that stretch reads LMAAGSFDDILAITGFNTCL. Over 291-300 the chain is Extracellular; that stretch reads GVAFSTGSTV. A helical membrane pass occupies residues 301–324; that stretch reads FNIFRGILEVVIGVAAGSFLGFFI. The Cytoplasmic portion of the chain corresponds to 325-339; that stretch reads QYFPSRDQDNLVWKR. The chain crosses the membrane as a helical span at residues 340-357; the sequence is AFLVLGFAVLAVFSSVYF. The Extracellular segment spans residues 358 to 361; sequence SFPG. The helical transmembrane segment at 362 to 373 threads the bilayer; sequence SGGLCTLVMAFL. Over 374–390 the chain is Cytoplasmic; sequence AGMRWTDKKSEVEKVIA. A helical transmembrane segment spans residues 391-411; that stretch reads VTWDVFQPLLFGLIGAEVSIV. Residues 412 to 417 are Extracellular-facing; sequence SLRAET. The helical transmembrane segment at 418–440 threads the bilayer; the sequence is VGLCVATLSIAVLIRILTTFLMV. Topologically, residues 441-461 are cytoplasmic; the sequence is CFAGFNIKEKIFISFAWLPKA. Residues 462–473 form a helical membrane-spanning segment; it reads TVQAAIGSVALD. Over 474–486 the chain is Extracellular; that stretch reads TARSHGEKQLEDY. The chain crosses the membrane as a helical span at residues 487–509; sequence GMDVLTVAFLAILITAPIGSLLI. The Cytoplasmic portion of the chain corresponds to 510-547; the sequence is GLLGPRVLQKSEHRTEEEVQGETSAHIQRKPEDSITEA. The segment at 522–547 is disordered; sequence HRTEEEVQGETSAHIQRKPEDSITEA. Residues 538–547 show a composition bias toward basic and acidic residues; the sequence is RKPEDSITEA.

The protein belongs to the monovalent cation:proton antiporter 1 (CPA1) transporter (TC 2.A.36) family. Homodimer; dimerization is essential for SLC9B2 activity. Lipids seem to play a role in the stabilization of the dimerization subdomain. In terms of tissue distribution, widely expressed. However expression seems to be restricted to specific cell types within individual organs, e.g. osteoclasts in the bone, distal tubules of the kidney or beta-cells of Langerhans islets. In sperm specifically present in the principal piece of sperm tail (at protein level).

The protein localises to the cell membrane. It is found in the mitochondrion membrane. Its subcellular location is the endosome membrane. The protein resides in the lysosome membrane. It localises to the recycling endosome membrane. The protein localises to the cytoplasmic vesicle. It is found in the secretory vesicle. Its subcellular location is the synaptic vesicle membrane. The protein resides in the cell projection. It localises to the cilium. The protein localises to the flagellum membrane. It is found in the basolateral cell membrane. Its subcellular location is the apical cell membrane. It catalyses the reaction Na(+)(in) + H(+)(out) = Na(+)(out) + H(+)(in). It carries out the reaction Li(+)(out) + H(+)(in) = Li(+)(in) + H(+)(out). The catalysed reaction is Li(+)(in) + Na(+)(out) = Li(+)(out) + Na(+)(in). With respect to regulation, allosterically inhibited by the N-terminal domain. Inhibited by phloretin. In terms of biological role, electroneutral Na(+) Li(+)/H(+) antiporter that extrudes Na(+) or Li(+) in exchange for external protons across the membrane. Uses the proton gradient/membrane potential to extrude sodium. Contributes to the regulation of intracellular pH and sodium homeostasis. Also able to mediate Na(+)/Li(+) antiporter activity in kidney. May play a physiological role in renal tubular function and blood pressure homeostasis. Plays an important role for insulin secretion and clathrin-mediated endocytosis in beta-cells. Involved in sperm motility and fertility. It is controversial whether SLC9B2 plays a role in osteoclast differentiation or not. The sequence is that of Sodium/hydrogen exchanger 9B2 from Mus musculus (Mouse).